Here is a 145-residue protein sequence, read N- to C-terminus: Large ribosomal subunit protein uL11 (145 aa).

It belongs to the universal ribosomal protein uL11 family. Part of the ribosomal stalk of the 50S ribosomal subunit. Interacts with L10 and the large rRNA to form the base of the stalk. L10 forms an elongated spine to which L12 dimers bind in a sequential fashion forming a multimeric L10(L12)X complex. Post-translationally, one or more lysine residues are methylated.

Forms part of the ribosomal stalk which helps the ribosome interact with GTP-bound translation factors. This Aquifex aeolicus (strain VF5) protein is Large ribosomal subunit protein uL11.